A 159-amino-acid chain; its full sequence is Nutritionally-regulated adipose and cardiac-enriched protein homolog (159 aa).

Residues methionine 1–histidine 67 are disordered. Composition is skewed to basic and acidic residues over residues serine 12–glutamate 25 and serine 50–arginine 63. A helical membrane pass occupies residues leucine 107–alanine 124.

The protein localises to the cell membrane. This chain is Nutritionally-regulated adipose and cardiac-enriched protein homolog (NRAC), found in Bos taurus (Bovine).